Consider the following 458-residue polypeptide: Putative long chain fatty acid-CoA ligase VraA (458 aa).

Belongs to the ATP-dependent AMP-binding enzyme family.

In Staphylococcus aureus (strain Mu3 / ATCC 700698), this protein is Putative long chain fatty acid-CoA ligase VraA (vraA).